A 221-amino-acid polypeptide reads, in one-letter code: GTP cyclohydrolase 1 (221 aa).

Positions 109, 112, and 180 each coordinate Zn(2+).

Belongs to the GTP cyclohydrolase I family. Toroid-shaped homodecamer, composed of two pentamers of five dimers.

It catalyses the reaction GTP + H2O = 7,8-dihydroneopterin 3'-triphosphate + formate + H(+). It functions in the pathway cofactor biosynthesis; 7,8-dihydroneopterin triphosphate biosynthesis; 7,8-dihydroneopterin triphosphate from GTP: step 1/1. This is GTP cyclohydrolase 1 from Sodalis glossinidius (strain morsitans).